A 564-amino-acid chain; its full sequence is MDIFRVLTRGASVKKESGPKAKAADYSVINGNDENHKEDNNESQIVKELDFFRNKRIISKVEDDREKTTENDSPNKEEKSGNDDGLIKPVITNTVEASALRKSYKGNVSGIDIPLPIGSFEDLISRFSFDKRLLNNLIENGFTEPTPIQCECIPVALNNRDVLACGPTGSGKTLAFLIPLVQQIIDDKQTAGLKGLIISPTKELANQIFIECFKLSYKIFLEKKRPLQVALLSKSLGAKLKNKVVSDKKYDIIISTPLRLIDVVKNEALDLSKVKHLIFDEADKLFDKTFVEQSDDILSACREPSLRKAMFSATIPSNVEEIAQSIMMDPVRVIIGHKEAANTNIEQKLIFCGNEEGKLIAIRQLVQEGEFKPPIIIFLESITRAKALYHELMYDRINVDVIHAERTALQRDRIIERFKTGELWCLICTDVLARGIDFKGVNLVINYDVPGSSQAYVHRIGRTGRGGRSGKAITFYTKQDSVAIKPIINVMKQSGCEVSEWMDKMAKMTRKEKESIKNGKAHKERKQITTVPKMDKAKRRRQQEMIAASKRRKNEELSKKHFSK.

Disordered stretches follow at residues 1–45 (MDIF…ESQI) and 62–87 (EDDREKTTENDSPNKEEKSGNDDGLI). 3 stretches are compositionally biased toward basic and acidic residues: residues 13–23 (VKKESGPKAKA), 33–45 (DENHKEDNNESQI), and 62–86 (EDDREKTTENDSPNKEEKSGNDDGL). The short motif at 122–150 (DLISRFSFDKRLLNNLIENGFTEPTPIQC) is the Q motif element. Positions 153-333 (IPVALNNRDV…QSIMMDPVRV (181 aa)) constitute a Helicase ATP-binding domain. 166–173 (GPTGSGKT) contacts ATP. The DEAD box motif lies at 280-283 (DEAD). Residues 344–506 (NIEQKLIFCG…EVSEWMDKMA (163 aa)) form the Helicase C-terminal domain. The segment at 512–564 (EKESIKNGKAHKERKQITTVPKMDKAKRRRQQEMIAASKRRKNEELSKKHFSK) is disordered. Residues 553-564 (KNEELSKKHFSK) are compositionally biased toward basic and acidic residues.

This sequence belongs to the DEAD box helicase family. DDX52/ROK1 subfamily. Interacts with the U3 snoRNA and is associated with the 90S and 40S pre-ribosomes. This association requires the presence of RRP5. Also interacts with OSH3.

The protein localises to the nucleus. It localises to the nucleolus. It catalyses the reaction ATP + H2O = ADP + phosphate + H(+). Functionally, ATP-dependent RNA helicase involved in 40S ribosomal subunit biogenesis. Required for the processing and cleavage of 35S pre-rRNA at sites A0, A1, and A2, leading to mature 18S rRNA. May also have a gene-specific regulatory function since it affects nuclear fusion by regulating KAR4 expression and contributes with KEM1 to ISP-1 sensitivity. The polypeptide is ATP-dependent RNA helicase ROK1 (ROK1) (Saccharomyces cerevisiae (strain ATCC 204508 / S288c) (Baker's yeast)).